A 217-amino-acid chain; its full sequence is Somatotropin (217 aa).

An N-terminal signal peptide occupies residues 1–24 (MAAGSWTSLLLAFTLLCLPQLREA). H44 serves as a coordination point for Zn(2+). A disulfide bridge connects residues C79 and C191. A Phosphoserine modification is found at S132. E200 is a binding site for Zn(2+). C208 and C215 form a disulfide bridge.

This sequence belongs to the somatotropin/prolactin family.

It is found in the secreted. Its function is as follows. Plays an important role in growth control. Its major role in stimulating body growth is to stimulate the liver and other tissues to secrete IGF1. It stimulates both the differentiation and proliferation of myoblasts. It also stimulates amino acid uptake and protein synthesis in muscle and other tissues. This Callithrix jacchus (White-tufted-ear marmoset) protein is Somatotropin (GH1).